Here is a 1265-residue protein sequence, read N- to C-terminus: MSTTVNVDSLAEYEKSQIKRALELGTVMTVFSFRKSTPERRTVQVIMETRQVAWSKTADKIEGFLDIMEIKEIRPGKNSKDFERAKAVRQKEDCCFTILYGTQFVLSTLSLAADSKEDAVNWLSGLKILHQEAMNASTPTIIESWLRKQIYSVDQTRRNSISLRELKTILPLINFKVSSAKFLKDKFVEIGAHKDELSFEQFHLFYKKLMFEQQKSILDEFKKDSSVFILGNTDRPDASAVYLHDFQRFLIHEQQEHWAQDLNKVRERMTKFIDDTMRETAEPFLFVDEFLTYLFSRENSIWDEKYDAVDMQDMNNPLSHYWISSSHNTYLTGDQLRSESSPEAYIRCLRMGCRCIELDCWDGPDGKPVIYHGWTRTTKIKFDDVVQAIKDHAFVTSSFPVILSIEEHCSVEQQRHMAKAFKEVFGDLLLTKPTEASADQLPSPSQLREKIIIKHKKLGPRGDVDVNMEDKKDEHKQQGELYMWDSIDQKWTRHYCAIADAKLSFSDDIEQTMEEEVPQDIPPTELHFGEKWFHKKVEKRTSAEKLLQEYCMETGGKDGTFLVRESETFPNDYTLSFWRSGRVQHCRIRSTMEGGTLKYYLTDNLTFSSIYALIQHYRETHLRCAEFELRLTDPVPNPNPHESKPWYYDSLSRGEAEDMLMRIPRDGAFLIRKREGSDSYAITFRARGKVKHCRINRDGRHFVLGTSAYFESLVELVSYYEKHSLYRKMRLRYPVTPELLERYNMERDINSLYDVSRMYVDPSEINPSMPQRTVKALYDYKAKRSDELSFCRGALIHNVSKEPGGWWKGDYGTRIQQYFPSNYVEDISTADFEELEKQIIEDNPLGSLCRGILDLNTYNVVKAPQGKNQKSFVFILEPKQQGDPPVEFATDRVEELFEWFQSIREITWKIDTKENNMKYWEKNQSIAIELSDLVVYCKPTSKTKDNLENPDFREIRSFVETKADSIIRQKPVDLLKYNQKGLTRVYPKGQRVDSSNYDPFRLWLCGSQMVALNFQTADKYMQMNHALFSLNGRTGYVLQPESMRTEKYDPMPPESQRKILMTLTVKVLGARHLPKLGRSIACPFVEVEICGAEYDNNKFKTTVVNDNGLSPIWAPTQEKVTFEIYDPNLAFLRFVVYEEDMFSDPNFLAHATYPIKAVKSGFRSVPLKNGYSEDIELASLLVFCEMRPVLESEEELYSSCRQLRRRQEELNNQLFLYDTHQNLRNANRDALVKEFSVNENQLQLYQEKCNKRLREKRVSNSKFYS.

A PH domain is found at 20–131; sequence RALELGTVMT…WLSGLKILHQ (112 aa). The PI-PLC X-box domain maps to 312–456; the sequence is QDMNNPLSHY…LREKIIIKHK (145 aa). Residues H327 and H372 contribute to the active site. 2 SH2 domains span residues 532 to 635 and 646 to 735; these read WFHK…TDPV and WYYD…RYPV. Phosphotyrosine; by BTK occurs at positions 753 and 759. The SH3 domain occupies 769-829; it reads MPQRTVKALY…PSNYVEDIST (61 aa). Residues 930–1044 enclose the PI-PLC Y-box domain; that stretch reads LSDLVVYCKP…GYVLQPESMR (115 aa). Positions 1038 to 1169 constitute a C2 domain; that stretch reads LQPESMRTEK…SGFRSVPLKN (132 aa). Phosphotyrosine; by BTK is present on Y1197. Phosphotyrosine occurs at positions 1217 and 1245.

As to quaternary structure, part of a complex composed of EEIG1, TNFRSF11A/RANK, PLCG2, GAB2, TEC and BTK; complex formation increases in the presence of TNFSF11/RANKL. Interacts (via SH2 domain) with CSF1R (tyrosine phosphorylated). Interacts constitutively with THEMIS2. Ca(2+) serves as cofactor. In terms of processing, phosphorylated on tyrosine residues by CSF1R. Phosphorylated on tyrosine residues by BTK and SYK; upon ligand-induced activation of a variety of growth factor receptors and immune system receptors. Phosphorylation leads to increased phospholipase activity.

The protein resides in the membrane raft. The enzyme catalyses a 1,2-diacyl-sn-glycero-3-phospho-(1D-myo-inositol-4,5-bisphosphate) + H2O = 1D-myo-inositol 1,4,5-trisphosphate + a 1,2-diacyl-sn-glycerol + H(+). The production of the second messenger molecules diacylglycerol (DAG) and inositol 1,4,5-trisphosphate (IP3) is mediated by activated phosphatidylinositol-specific phospholipase C enzymes. It is a crucial enzyme in transmembrane signaling. The chain is 1-phosphatidylinositol 4,5-bisphosphate phosphodiesterase gamma-2 from Homo sapiens (Human).